The chain runs to 372 residues: MKFVDEATIEVIAGKGGNGVASFRREKFIPRGGPDGGDGGRGGSIFAVADRNINTLIDFRYARLHRAKNGENGRGSDQYGAAAPDITLRVPVGTVVHDADTGEVLFDLNRHGETVTLAAGGQGGMGNIHFKSSVNRAPRQWTPGKEGEQRRLRLELKVLADVGLLGLPNAGKSTLISRISNARPKIADYPFTTLHPNLGVVRTSPSRSFVVADIPGLIEGASEGAGLGHLFLRHLARTRVLLHLVDVSSPDPDADPIESAVENARAIVEELRRYDPELAEKPRWLVLNKLDMVPDPASVQQRFCEAFGWTGPVFCISGLNGEGTQELIWALQDYLDAEKRKEQITQDKADGSYVHEDPRFDTTRDAPPSGKD.

One can recognise an Obg domain in the interval 1–159 (MKFVDEATIE…RRLRLELKVL (159 aa)). An OBG-type G domain is found at 160-336 (ADVGLLGLPN…LIWALQDYLD (177 aa)). GTP-binding positions include 166–173 (GLPNAGKS), 191–195 (FTTLH), 213–216 (DIPG), 288–291 (NKLD), and 317–319 (SGL). Residues S173 and T193 each contribute to the Mg(2+) site. The tract at residues 341-372 (KEQITQDKADGSYVHEDPRFDTTRDAPPSGKD) is disordered.

The protein belongs to the TRAFAC class OBG-HflX-like GTPase superfamily. OBG GTPase family. As to quaternary structure, monomer. Requires Mg(2+) as cofactor.

The protein localises to the cytoplasm. Functionally, an essential GTPase which binds GTP, GDP and possibly (p)ppGpp with moderate affinity, with high nucleotide exchange rates and a fairly low GTP hydrolysis rate. Plays a role in control of the cell cycle, stress response, ribosome biogenesis and in those bacteria that undergo differentiation, in morphogenesis control. This is GTPase Obg from Bordetella avium (strain 197N).